The sequence spans 115 residues: Large ribosomal subunit protein uL18 (115 aa).

The protein belongs to the universal ribosomal protein uL18 family. Part of the 50S ribosomal subunit; part of the 5S rRNA/L5/L18/L25 subcomplex. Contacts the 5S and 23S rRNAs.

In terms of biological role, this is one of the proteins that bind and probably mediate the attachment of the 5S RNA into the large ribosomal subunit, where it forms part of the central protuberance. The chain is Large ribosomal subunit protein uL18 from Vesicomyosocius okutanii subsp. Calyptogena okutanii (strain HA).